We begin with the raw amino-acid sequence, 141 residues long: Large ribosomal subunit protein uL16 (141 aa).

Belongs to the universal ribosomal protein uL16 family. Part of the 50S ribosomal subunit.

Binds 23S rRNA and is also seen to make contacts with the A and possibly P site tRNAs. The sequence is that of Large ribosomal subunit protein uL16 from Campylobacter lari (strain RM2100 / D67 / ATCC BAA-1060).